The following is a 497-amino-acid chain: Interferon regulatory factor 5 (497 aa).

A Nuclear localization signal motif is present at residues 12 to 18; that stretch reads PRRVRLK. Positions 14–122 form a DNA-binding region, IRF tryptophan pentad repeat; the sequence is RVRLKPWLVA…QPYKIYEVCS (109 aa). The segment at 124 to 178 is disordered; it reads GPAPTESQPTDDYVLGEEEEEEEEELQRMLPGLSITEPALPGPPNAPYSLPKEDT. Acidic residues predominate over residues 137–148; the sequence is VLGEEEEEEEEE. Residues 149–159 carry the Nuclear export signal motif; sequence LQRMLPGLSIT. Serine 157 bears the Phosphoserine; by TBK1 mark. Serine 300 carries the post-translational modification Phosphoserine. Glycyl lysine isopeptide (Lys-Gly) (interchain with G-Cter in ubiquitin) cross-links involve residues lysine 410 and lysine 411. Serine 430 carries the phosphoserine modification. At serine 434 the chain carries Phosphoserine; by IKKB. Serine 436 and serine 439 each carry phosphoserine. Phosphoserine; by IKKB is present on serine 445.

The protein belongs to the IRF family. As to quaternary structure, homodimer, when phosphorylated. Interacts with TASL (via pLxIS motif); interaction takes place downstream of TLR7, TLR8 or TLR9, leading to its activation. Interacts with MYD88 and TRAF6. In terms of processing, phosphorylation of serine and threonine residues by IKBKB in a C-terminal autoinhibitory region, stimulates dimerization, transport into the nucleus, assembly with the coactivator CBP/EP300 and initiation of transcription. Post-translationally, 'Lys-63'-linked polyubiquitination by TRAF6 is required for activation.

The protein resides in the cytoplasm. It localises to the nucleus. With respect to regulation, maintained as a monomer in an autoinhibited state. Phosphorylation and activation follow the following steps: innate adapter protein TASL recruits IRF5, thereby licensing IRF5 for phosphorylation by IKBKB. Phosphorylated IRF5 dissociates from the adapter proteins, dimerizes, and then enters the nucleus to induce IFNs. In terms of biological role, transcription factor that plays a critical role in innate immunity by activating expression of type I interferon (IFN) IFNA and INFB and inflammatory cytokines downstream of endolysosomal toll-like receptors TLR7, TLR8 and TLR9. Regulates the transcription of type I IFN genes (IFN-alpha and IFN-beta) and IFN-stimulated genes (ISG) by binding to an interferon-stimulated response element (ISRE) in their promoters. Can efficiently activate both the IFN-beta (IFNB) and the IFN-alpha (IFNA) genes and mediate their induction downstream of the TLR-activated, MyD88-dependent pathway. The sequence is that of Interferon regulatory factor 5 from Mus musculus (Mouse).